We begin with the raw amino-acid sequence, 389 residues long: Lipid-A-disaccharide synthase (389 aa).

It belongs to the LpxB family.

The enzyme catalyses a lipid X + a UDP-2-N,3-O-bis[(3R)-3-hydroxyacyl]-alpha-D-glucosamine = a lipid A disaccharide + UDP + H(+). The protein operates within bacterial outer membrane biogenesis; LPS lipid A biosynthesis. Its function is as follows. Condensation of UDP-2,3-diacylglucosamine and 2,3-diacylglucosamine-1-phosphate to form lipid A disaccharide, a precursor of lipid A, a phosphorylated glycolipid that anchors the lipopolysaccharide to the outer membrane of the cell. In Paraburkholderia phymatum (strain DSM 17167 / CIP 108236 / LMG 21445 / STM815) (Burkholderia phymatum), this protein is Lipid-A-disaccharide synthase.